A 118-amino-acid polypeptide reads, in one-letter code: Large ribosomal subunit protein uL18 (118 aa).

The protein belongs to the universal ribosomal protein uL18 family. In terms of assembly, part of the 50S ribosomal subunit; part of the 5S rRNA/L5/L18/L25 subcomplex. Contacts the 5S and 23S rRNAs.

In terms of biological role, this is one of the proteins that bind and probably mediate the attachment of the 5S RNA into the large ribosomal subunit, where it forms part of the central protuberance. The protein is Large ribosomal subunit protein uL18 of Lactobacillus acidophilus (strain ATCC 700396 / NCK56 / N2 / NCFM).